Consider the following 125-residue polypeptide: Small ribosomal subunit protein bS6m (125 aa).

This sequence belongs to the bacterial ribosomal protein bS6 family. As to quaternary structure, component of the mitochondrial ribosome small subunit (28S) which comprises a 12S rRNA and about 30 distinct proteins.

It is found in the mitochondrion. The protein is Small ribosomal subunit protein bS6m (Mrps6) of Mus musculus (Mouse).